The chain runs to 373 residues: Dual-specificity RNA methyltransferase RlmN (373 aa).

The active-site Proton acceptor is the glutamate 94. Residues 100 to 339 (EDDRATLCVS…VIVRKTRGDD (240 aa)) enclose the Radical SAM core domain. The cysteines at positions 107 and 344 are disulfide-linked. [4Fe-4S] cluster-binding residues include cysteine 114, cysteine 118, and cysteine 121. S-adenosyl-L-methionine-binding positions include 168–169 (GE), serine 200, 222–224 (SIH), and asparagine 301. The active-site S-methylcysteine intermediate is cysteine 344.

This sequence belongs to the radical SAM superfamily. RlmN family. The cofactor is [4Fe-4S] cluster.

The protein resides in the cytoplasm. The catalysed reaction is adenosine(2503) in 23S rRNA + 2 reduced [2Fe-2S]-[ferredoxin] + 2 S-adenosyl-L-methionine = 2-methyladenosine(2503) in 23S rRNA + 5'-deoxyadenosine + L-methionine + 2 oxidized [2Fe-2S]-[ferredoxin] + S-adenosyl-L-homocysteine. It catalyses the reaction adenosine(37) in tRNA + 2 reduced [2Fe-2S]-[ferredoxin] + 2 S-adenosyl-L-methionine = 2-methyladenosine(37) in tRNA + 5'-deoxyadenosine + L-methionine + 2 oxidized [2Fe-2S]-[ferredoxin] + S-adenosyl-L-homocysteine. Its function is as follows. Specifically methylates position 2 of adenine 2503 in 23S rRNA and position 2 of adenine 37 in tRNAs. m2A2503 modification seems to play a crucial role in the proofreading step occurring at the peptidyl transferase center and thus would serve to optimize ribosomal fidelity. The chain is Dual-specificity RNA methyltransferase RlmN from Shewanella pealeana (strain ATCC 700345 / ANG-SQ1).